We begin with the raw amino-acid sequence, 176 residues long: Inorganic pyrophosphatase (176 aa).

Residues Lys30, Arg44, and Tyr56 each contribute to the substrate site. Asp66, Asp71, and Asp103 together coordinate Mg(2+). Tyr142 contributes to the substrate binding site.

This sequence belongs to the PPase family. Homohexamer. It depends on Mg(2+) as a cofactor.

It is found in the cytoplasm. The catalysed reaction is diphosphate + H2O = 2 phosphate + H(+). Catalyzes the hydrolysis of inorganic pyrophosphate (PPi) forming two phosphate ions. The protein is Inorganic pyrophosphatase of Vibrio parahaemolyticus serotype O3:K6 (strain RIMD 2210633).